The chain runs to 136 residues: MSVLVYFSSSSENTLRFIERVGLPAVRIPLNERERIQVDEPYILVVPSYGGGGTAGAVPRQVIRFLNDPHNRALIRGVIAAGNRNFGDAFCRAGDLISQKCGVPYLYRFELMGTQQDVENVRKGVNEFWQRQPQNA.

Belongs to the NrdI family.

In terms of biological role, probably involved in ribonucleotide reductase function. This chain is Protein NrdI, found in Enterobacter sp. (strain 638).